The chain runs to 219 residues: MNPFRILGDLSHLTSILILIHNIKTTRYIEGISFKTQTLYALVFITRYLDLLTFHWVSLYNALMKIFFIVSTAYIVVLLQGSKRTNTIAYNEMLMHDTFKIQHLLIGSALMSVFFHHKFTFLELAWSFSVWLESVAILPQLYMLSKGGKTRSLTVHYIFAMGLYRALYIPNWIWRYSTEDKKLDKIAFFAGLLQTLLYSDFFYIYYTKVIRGKGFKLPK.

The Lumenal segment spans residues 1 to 5 (MNPFR). A helical membrane pass occupies residues 6 to 26 (ILGDLSHLTSILILIHNIKTT). At 27 to 37 (RYIEGISFKTQ) the chain is on the cytoplasmic side. Helical transmembrane passes span 38-58 (TLYA…HWVS) and 59-79 (LYNA…VVLL). The Cytoplasmic segment spans residues 80–98 (QGSKRTNTIAYNEMLMHDT). The chain crosses the membrane as a helical span at residues 99–116 (FKIQHLLIGSALMSVFFH). At 117–118 (HK) the chain is on the lumenal side. A helical transmembrane segment spans residues 119-139 (FTFLELAWSFSVWLESVAILP). Residues 140-152 (QLYMLSKGGKTRS) are Cytoplasmic-facing. The helical transmembrane segment at 153-173 (LTVHYIFAMGLYRALYIPNWI) threads the bilayer. Residues 174–185 (WRYSTEDKKLDK) are Lumenal-facing. A helical membrane pass occupies residues 186 to 206 (IAFFAGLLQTLLYSDFFYIYY). The Cytoplasmic portion of the chain corresponds to 207 to 219 (TKVIRGKGFKLPK).

The protein belongs to the ERD2 family.

Its subcellular location is the endoplasmic reticulum membrane. Functionally, required for the retention of luminal endoplasmic reticulum proteins. Determines the specificity of the luminal ER protein retention system. Also required for normal vesicular traffic through the Golgi. This receptor strongly recognizes H-D-E-L and weakly recognizes D-D-E-L and K-D-E-L. This is ER lumen protein-retaining receptor from Saccharomyces cerevisiae (strain ATCC 204508 / S288c) (Baker's yeast).